Consider the following 721-residue polypeptide: Pentatricopeptide repeat-containing protein At3g49710 (721 aa).

PPR repeat units follow at residues 42–72 (STYL…TEEP), 73–103 (NVFS…IPQP), 104–138 (DTVS…GFEV), 139–169 (DGFT…SGGF), 172–202 (YSSV…MDEL), 204–238 (DEVS…GFKI), 239–273 (DMFT…GFHQ), 274–307 (NSHV…ILSP), 308–343 (DLVV…GHRP), 344–378 (DDCS…HIPS), 380–410 (RISV…MPEL), 411–445 (NAVS…GIAP), 446–476 (NKIT…MKET), and 482–512 (EAEH…MPYK). A type E motif region spans residues 517–592 (AWAALLGACR…KPGCSWIEVK (76 aa)). The segment at 593–623 (KKKHVFVAEDWSHPMIREVNEYLEEMMKKMK) is type E(+) motif. Residues 624–721 (KVGYVMDKKW…DGKCSCGDYW (98 aa)) form a type DYW motif region.

Belongs to the PPR family. PCMP-H subfamily.

This is Pentatricopeptide repeat-containing protein At3g49710 (PCMP-H79) from Arabidopsis thaliana (Mouse-ear cress).